A 148-amino-acid polypeptide reads, in one-letter code: Putative nickel-responsive regulator (148 aa).

Residues H88, H99, H101, and C107 each coordinate Ni(2+).

The protein belongs to the transcriptional regulatory CopG/NikR family. Requires Ni(2+) as cofactor.

Transcriptional regulator. In Helicobacter pylori (strain Shi470), this protein is Putative nickel-responsive regulator.